A 232-amino-acid chain; its full sequence is Phosphoribosylformylglycinamidine synthase subunit PurQ (232 aa).

The region spanning 2–232 (RIGVITFPGS…SVVRSTLVEA (231 aa)) is the Glutamine amidotransferase type-1 domain. Catalysis depends on Cys-85, which acts as the Nucleophile. Active-site residues include His-194 and Glu-196.

Part of the FGAM synthase complex composed of 1 PurL, 1 PurQ and 2 PurS subunits.

The protein localises to the cytoplasm. It catalyses the reaction N(2)-formyl-N(1)-(5-phospho-beta-D-ribosyl)glycinamide + L-glutamine + ATP + H2O = 2-formamido-N(1)-(5-O-phospho-beta-D-ribosyl)acetamidine + L-glutamate + ADP + phosphate + H(+). The catalysed reaction is L-glutamine + H2O = L-glutamate + NH4(+). Its pathway is purine metabolism; IMP biosynthesis via de novo pathway; 5-amino-1-(5-phospho-D-ribosyl)imidazole from N(2)-formyl-N(1)-(5-phospho-D-ribosyl)glycinamide: step 1/2. In terms of biological role, part of the phosphoribosylformylglycinamidine synthase complex involved in the purines biosynthetic pathway. Catalyzes the ATP-dependent conversion of formylglycinamide ribonucleotide (FGAR) and glutamine to yield formylglycinamidine ribonucleotide (FGAM) and glutamate. The FGAM synthase complex is composed of three subunits. PurQ produces an ammonia molecule by converting glutamine to glutamate. PurL transfers the ammonia molecule to FGAR to form FGAM in an ATP-dependent manner. PurS interacts with PurQ and PurL and is thought to assist in the transfer of the ammonia molecule from PurQ to PurL. This Leifsonia xyli subsp. xyli (strain CTCB07) protein is Phosphoribosylformylglycinamidine synthase subunit PurQ.